A 134-amino-acid chain; its full sequence is Large ribosomal subunit protein bL20 (134 aa).

The protein belongs to the bacterial ribosomal protein bL20 family.

Its function is as follows. Binds directly to 23S ribosomal RNA and is necessary for the in vitro assembly process of the 50S ribosomal subunit. It is not involved in the protein synthesizing functions of that subunit. The protein is Large ribosomal subunit protein bL20 of Sinorhizobium medicae (strain WSM419) (Ensifer medicae).